Reading from the N-terminus, the 392-residue chain is Xyloside xylosyltransferase 1 (392 aa).

At 1-19 (MGLLRGGAACARAMARLGA) the chain is on the cytoplasmic side. The helical; Signal-anchor for type II membrane protein transmembrane segment at 20 to 42 (LRSHYCALLLAAALAVCAFYYLG) threads the bilayer. The Lumenal portion of the chain corresponds to 43–392 (SGRETFSSAT…GNCNTPIPED (350 aa)). UDP-alpha-D-xylose is bound at residue 103–105 (MFT). A Mn(2+)-binding site is contributed by Asp225. Leu226 contacts UDP-alpha-D-xylose. Asp227 provides a ligand contact to Mn(2+). Residues 262-265 (HTFW) are interaction with target proteins. Residues Ser289, Leu327, and Gln330 each contribute to the UDP-alpha-D-xylose site. A glycoprotein-binding residues include Gln330 and Trp359. Intrachain disulfides connect Cys349–Cys374 and Cys356–Cys385. Residue His382 participates in Mn(2+) binding. Asn384 provides a ligand contact to a glycoprotein.

Belongs to the glycosyltransferase 8 family. In terms of assembly, homodimer. Dimer formation may be essential for the retention in endoplasmic reticulum. Mg(2+) is required as a cofactor. Requires Mn(2+) as cofactor.

The protein localises to the endoplasmic reticulum membrane. The enzyme catalyses 3-O-[alpha-D-xylosyl-(1-&gt;3)-beta-D-glucosyl]-L-seryl-[EGF-like domain protein] + UDP-alpha-D-xylose = 3-O-[alpha-D-xylosyl-(1-&gt;3)-alpha-D-xylosyl-(1-&gt;3)-beta-D-glucosyl]-L-seryl-[EGF-like domain protein] + UDP + H(+). Its function is as follows. Alpha-1,3-xylosyltransferase, which elongates the O-linked xylose-glucose disaccharide attached to EGF-like repeats in the extracellular domain of target proteins by catalyzing the addition of the second xylose. Known targets include Notch proteins and coagulation factors, such as F9. The sequence is that of Xyloside xylosyltransferase 1 (Xxylt1) from Mus musculus (Mouse).